Consider the following 518-residue polypeptide: MTYEIGDRLKIGGYFCTIKFIGVIKPWPSVKAYGVEWDDHSRGKHSGTIDDIHYFDVQIPNSGSFLKESKIKSPGVRRITFYEALSEKYGGSSNNINDLSIGNKRVEGLGFDELNARNKNYKKLRKIALRDSDVAILFQNQDELNRVIQNCVNVKDLDLSLNLFTNINSLCEFIEPLKNLESLNISQNKLLSGWDNLKEYDLSHIKTLRLSSCGLSYKHIGKLLKSFRTLKMLDLSYNNLTSAGIQNFENEIPCTLEELNISGNNLISFPLFPKNLTLKGLNVSNNQISRAPSIAIYSVESLDITDNKFKERSLIDDLNKTFPSLKNIHLSGNEFNYNGNYINVEEQATFYEVLARFDRVMVLNGSICDVKTRREAEMFFVSKVMNNELSYDTNLPRWSSLIKSYEIDMSKLSFNNERETRQSLVLKIKIRAGKKPSSDLDYWVLPSFTVRYVKSVICRKLNFDILNVKLFHENSEGMINEIKYNFRPISDFNVVNGDIIHVSSPVNNKSIQKVNSPS.

The 45-residue stretch at 23-67 folds into the CAP-Gly domain; that stretch reads VIKPWPSVKAYGVEWDDHSRGKHSGTIDDIHYFDVQIPNSGSFLK. LRR repeat units lie at residues 153–174, 179–201, 204–227, 229–252, 255–276, 277–298, 299–319, and 324–345; these read NVKD…CEFI, NLES…KEYD, HIKT…LKSF, TLKM…ENEI, TLEE…PKNL, TLKG…AIYS, VESL…DDLN, and SLKN…INVE.

Its subcellular location is the cytoplasm. It localises to the cytoskeleton. Its function is as follows. Required for viability in the absence of the kinesin-related CIN8 mitotic motor. Seems to be involved in the assembly of alpha-tubulin. In Saccharomyces cerevisiae (strain ATCC 204508 / S288c) (Baker's yeast), this protein is Protein PAC2 (PAC2).